The primary structure comprises 555 residues: Tau-cadinol synthase (555 aa).

(2E,6E)-farnesyl diphosphate-binding residues include arginine 270, aspartate 307, aspartate 311, arginine 448, and aspartate 451. Aspartate 307 and aspartate 311 together coordinate Mg(2+). The short motif at 307-311 (DDTYD) is the DDXXD motif element. Positions 451, 455, and 459 each coordinate Mg(2+).

The protein belongs to the terpene synthase family. Mg(2+) serves as cofactor.

The catalysed reaction is (2E,6E)-farnesyl diphosphate + H2O = tau-cadinol + diphosphate. The enzyme catalyses (2E,6E)-farnesyl diphosphate = (+)-gamma-cadinene + diphosphate. It participates in secondary metabolite biosynthesis; terpenoid biosynthesis. Its function is as follows. Sesquiterpene synthase that catalyzes the formation of sesquiterpenes and sesquiterpenoid alcohols. Converts farnesyl diphosphate (FPP) to tau-cadinol. Converts FPP to gamma-cadinene. Tau-cadinol is the major product. The sequence is that of Tau-cadinol synthase from Lavandula angustifolia (Lavender).